The following is a 315-amino-acid chain: NAD(P)H-dependent anabolic L-arginine dehydrogenase DauB (315 aa).

Belongs to the ornithine cyclodeaminase/mu-crystallin family.

It catalyses the reaction L-arginine + NAD(+) + H2O = 5-guanidino-2-oxopentanoate + NH4(+) + NADH + H(+). It carries out the reaction L-arginine + NADP(+) + H2O = 5-guanidino-2-oxopentanoate + NH4(+) + NADPH + H(+). Its function is as follows. Involved in the anabolism of D-lysine and D-arginine. Under aerobic conditions, the arginine succinyltransferase (AST) and arginine transaminase (ATA) pathways are 2 major routes for L-arginine utilization as the sole source of carbon and nitrogen. The D-to-L racemization of arginine by DauA and DauB is necessary, before to be channeled into the AST and/or ATA pathways. DauB catalyzes the synthesis of L-arginine from 2-ketoarginine (2-KA) and ammonium. The protein is NAD(P)H-dependent anabolic L-arginine dehydrogenase DauB of Pseudomonas aeruginosa (strain ATCC 15692 / DSM 22644 / CIP 104116 / JCM 14847 / LMG 12228 / 1C / PRS 101 / PAO1).